Here is a 426-residue protein sequence, read N- to C-terminus: Enolase (426 aa).

Glutamine 163 is a binding site for (2R)-2-phosphoglycerate. The active-site Proton donor is the glutamate 205. Residues aspartate 242, glutamate 283, and aspartate 310 each coordinate Mg(2+). (2R)-2-phosphoglycerate is bound by residues lysine 335, arginine 364, serine 365, and lysine 386. The Proton acceptor role is filled by lysine 335.

This sequence belongs to the enolase family. Mg(2+) is required as a cofactor.

The protein resides in the cytoplasm. It localises to the secreted. It is found in the cell surface. It catalyses the reaction (2R)-2-phosphoglycerate = phosphoenolpyruvate + H2O. Its pathway is carbohydrate degradation; glycolysis; pyruvate from D-glyceraldehyde 3-phosphate: step 4/5. Its function is as follows. Catalyzes the reversible conversion of 2-phosphoglycerate (2-PG) into phosphoenolpyruvate (PEP). It is essential for the degradation of carbohydrates via glycolysis. The sequence is that of Enolase from Clavibacter sepedonicus (Clavibacter michiganensis subsp. sepedonicus).